The following is a 345-amino-acid chain: Nicotinate-nucleotide--dimethylbenzimidazole phosphoribosyltransferase (345 aa).

Residue glutamate 311 is the Proton acceptor of the active site.

Belongs to the CobT family.

The catalysed reaction is 5,6-dimethylbenzimidazole + nicotinate beta-D-ribonucleotide = alpha-ribazole 5'-phosphate + nicotinate + H(+). The protein operates within nucleoside biosynthesis; alpha-ribazole biosynthesis; alpha-ribazole from 5,6-dimethylbenzimidazole: step 1/2. Catalyzes the synthesis of alpha-ribazole-5'-phosphate from nicotinate mononucleotide (NAMN) and 5,6-dimethylbenzimidazole (DMB). This chain is Nicotinate-nucleotide--dimethylbenzimidazole phosphoribosyltransferase, found in Janthinobacterium sp. (strain Marseille) (Minibacterium massiliensis).